The sequence spans 445 residues: Fatty acid desaturase 3 (445 aa).

Positions 1–21 (MGGVGEPGPREGPAQPGAPLP) are disordered. Over 1-133 (MGGVGEPGPR…DMKLFDASPT (133 aa)) the chain is Cytoplasmic. The 78-residue stretch at 20 to 97 (LPTFCWEQIR…LQPLLIGELA (78 aa)) folds into the Cytochrome b5 heme-binding domain. The chain crosses the membrane as a helical span at residues 134-154 (FFAFLLGHILAMEVLAWLLIY). Topologically, residues 155 to 159 (LLGPG) are lumenal. Residues 160–180 (WVPSALAAFILAISQAQSWCL) form a helical membrane-spanning segment. At 181–263 (QHDLGHASIF…KRRYLPYNQQ (83 aa)) the chain is on the cytoplasmic side. The Histidine box-1 motif lies at 182-186 (HDLGH). The Histidine box-2 signature appears at 219–223 (HFQHH). A helical transmembrane segment spans residues 264-284 (HLYFFLIGPPLLTLVNFEVEN). Topologically, residues 285 to 306 (LAYMLVCMQWADLLWAASFYAR) are lumenal. A helical membrane pass occupies residues 307–327 (FFLSYLPFYGVPGVLLFFVAV). The Cytoplasmic segment spans residues 328–445 (RVLESHWFVW…DIWLDAYLHQ (118 aa)). Residues 383-387 (QIEHH) carry the Histidine box-3 motif.

Belongs to the fatty acid desaturase type 1 family. Highly expressed in various organs and tissues including liver, kidney, brain, lung, pancreas, testis, ovary and skeletal muscle (at protein level).

The protein resides in the endoplasmic reticulum membrane. It carries out the reaction an N-acylsphing-4-enine + 2 Fe(II)-[cytochrome b5] + O2 + 2 H(+) = an N-acyl-sphinga-4E,14Z-dienine + 2 Fe(III)-[cytochrome b5] + 2 H2O. It catalyses the reaction N-(hexanoyl)sphing-4-enine + 2 Fe(II)-[cytochrome b5] + O2 + 2 H(+) = N-hexanoyl-sphinga-4E,14Z-dienine + 2 Fe(III)-[cytochrome b5] + 2 H2O. The enzyme catalyses sphing-4-enine + 2 Fe(II)-[cytochrome b5] + O2 + 2 H(+) = sphinga-4E,14Z-dienine + 2 Fe(III)-[cytochrome b5] + 2 H2O. The catalysed reaction is (11E)-octadecenoyl-CoA + 2 Fe(II)-[cytochrome b5] + O2 + 2 H(+) = (11E,13Z)-octadecadienoyl-CoA + 2 Fe(III)-[cytochrome b5] + 2 H2O. It carries out the reaction N-acyl-1-deoxysphinganine + 2 Fe(II)-[cytochrome b5] + O2 + 2 H(+) = N-acyl-1-deoxysphing-14Z-enine + 2 Fe(III)-[cytochrome b5] + 2 H2O. It catalyses the reaction an N-acylsphinganine + 2 Fe(II)-[cytochrome b5] + O2 + 2 H(+) = an N-acylsphing-14Z-enine + 2 Fe(III)-[cytochrome b5] + 2 H2O. Its pathway is lipid metabolism; sphingolipid metabolism. The protein operates within lipid metabolism; polyunsaturated fatty acid biosynthesis. Mammals have different sphingoid bases that differ in their length and/or pattern of desaturation and hydroxyl groups. The predominant sphingoid base that comprises mammalian ceramides is sphing-4-enine (sphingosine or SPH) which has a trans (E) desaturation at carbon 4. FADS3 is a desaturase that introduces a cis (Z) double bond between carbon 14 and carbon 15 of the sphingoid base (also known as long chain base, LCB), producing LCBs such as sphinga-4,14-dienine (SPD, d18:2(4E,14Z)) from SPH. Prefers SPH-containing ceramides (N-acylsphing-4-enines) as substrates. Capable of metabolizing also the SPH in its free form. SPD ceramides occur widely in mammalian tissues and cells. Due to their unusual structure containing a cis double bond, SPD ceramides may have an opposite, negative role in lipid microdomain formation relative to conventional ceramides. Could be involved in the detoxification of 1-deoxy sphingolipids, by desaturating the cytotoxic 1-deoxysphinganine (1-deoxySA, m18:0), produced under pathological conditions, to 1-deoxysphingenine (1-deoxysphingosine, 1-deoxySO, m18:1). Although prefers SPH-containing ceramides (N-acylsphing-4-enines) as substrates, it also exhibits activity toward dihydrosphingosine-containing CERs (N-acylsphinganines) and produces 14Z-SPH-containing sphingolipids,which can be found in patients with DEGS1 mutations. Its desaturase mechanism involves an electron transfer facilitated by cytochrome b5. FADS3 also acts as a methyl-end fatty acyl coenzyme A (CoA) desaturase that introduces a cis double bond between the preexisting double bond and the terminal methyl group of the fatty acyl chain. Desaturates (11E)-octadecenoate (trans-vaccenoate, the predominant trans fatty acid in human milk) at carbon 13 to generate (11E,13Z)-octadecadienoate (also known as conjugated linoleic acid 11E,13Z-CLA). The chain is Fatty acid desaturase 3 from Homo sapiens (Human).